The chain runs to 106 residues: Nucleoid-associated protein BBta_7345 (106 aa).

This sequence belongs to the YbaB/EbfC family. In terms of assembly, homodimer.

The protein resides in the cytoplasm. Its subcellular location is the nucleoid. Functionally, binds to DNA and alters its conformation. May be involved in regulation of gene expression, nucleoid organization and DNA protection. The polypeptide is Nucleoid-associated protein BBta_7345 (Bradyrhizobium sp. (strain BTAi1 / ATCC BAA-1182)).